A 73-amino-acid polypeptide reads, in one-letter code: UPF0346 protein LVIS_0790 (73 aa).

It belongs to the UPF0346 family.

The chain is UPF0346 protein LVIS_0790 from Levilactobacillus brevis (strain ATCC 367 / BCRC 12310 / CIP 105137 / JCM 1170 / LMG 11437 / NCIMB 947 / NCTC 947) (Lactobacillus brevis).